A 325-amino-acid polypeptide reads, in one-letter code: tRNA(Ile)-lysidine synthase (325 aa).

34–39 provides a ligand contact to ATP; the sequence is SGGADS.

It belongs to the tRNA(Ile)-lysidine synthase family.

Its subcellular location is the cytoplasm. The enzyme catalyses cytidine(34) in tRNA(Ile2) + L-lysine + ATP = lysidine(34) in tRNA(Ile2) + AMP + diphosphate + H(+). Ligates lysine onto the cytidine present at position 34 of the AUA codon-specific tRNA(Ile) that contains the anticodon CAU, in an ATP-dependent manner. Cytidine is converted to lysidine, thus changing the amino acid specificity of the tRNA from methionine to isoleucine. This chain is tRNA(Ile)-lysidine synthase, found in Rhodococcus opacus (strain B4).